The chain runs to 206 residues: Small ribosomal subunit protein uS4 (206 aa).

The S4 RNA-binding domain occupies 96-157 (GRLDNVVYRM…KAKKQSRVRA (62 aa)).

It belongs to the universal ribosomal protein uS4 family. In terms of assembly, part of the 30S ribosomal subunit. Contacts protein S5. The interaction surface between S4 and S5 is involved in control of translational fidelity.

In terms of biological role, one of the primary rRNA binding proteins, it binds directly to 16S rRNA where it nucleates assembly of the body of the 30S subunit. Its function is as follows. With S5 and S12 plays an important role in translational accuracy. The sequence is that of Small ribosomal subunit protein uS4 from Sodalis glossinidius (strain morsitans).